The sequence spans 206 residues: Small ribosomal subunit protein uS4 (206 aa).

Positions 96-158 (GRLDNVVYRM…AKQQTRIKAA (63 aa)) constitute an S4 RNA-binding domain.

It belongs to the universal ribosomal protein uS4 family. As to quaternary structure, part of the 30S ribosomal subunit. Contacts protein S5. The interaction surface between S4 and S5 is involved in control of translational fidelity.

Its function is as follows. One of the primary rRNA binding proteins, it binds directly to 16S rRNA where it nucleates assembly of the body of the 30S subunit. Functionally, with S5 and S12 plays an important role in translational accuracy. In Vibrio vulnificus (strain CMCP6), this protein is Small ribosomal subunit protein uS4.